We begin with the raw amino-acid sequence, 287 residues long: Ribosomal RNA small subunit methyltransferase A (287 aa).

S-adenosyl-L-methionine contacts are provided by Asn-35, Val-37, Gly-62, Glu-83, Asp-113, and Asn-131.

It belongs to the class I-like SAM-binding methyltransferase superfamily. rRNA adenine N(6)-methyltransferase family. RsmA subfamily.

The protein resides in the cytoplasm. It carries out the reaction adenosine(1518)/adenosine(1519) in 16S rRNA + 4 S-adenosyl-L-methionine = N(6)-dimethyladenosine(1518)/N(6)-dimethyladenosine(1519) in 16S rRNA + 4 S-adenosyl-L-homocysteine + 4 H(+). Specifically dimethylates two adjacent adenosines (A1518 and A1519) in the loop of a conserved hairpin near the 3'-end of 16S rRNA in the 30S particle. May play a critical role in biogenesis of 30S subunits. The polypeptide is Ribosomal RNA small subunit methyltransferase A (Thermobifida fusca (strain YX)).